The sequence spans 222 residues: Ribose-5-phosphate isomerase A (222 aa).

Substrate is bound by residues 28-31, 81-84, and 94-97; these read TGST, DGAD, and KGGG. Glutamate 103 acts as the Proton acceptor in catalysis. Substrate is bound at residue lysine 121.

This sequence belongs to the ribose 5-phosphate isomerase family. As to quaternary structure, homodimer.

It catalyses the reaction aldehydo-D-ribose 5-phosphate = D-ribulose 5-phosphate. Its pathway is carbohydrate degradation; pentose phosphate pathway; D-ribose 5-phosphate from D-ribulose 5-phosphate (non-oxidative stage): step 1/1. In terms of biological role, catalyzes the reversible conversion of ribose-5-phosphate to ribulose 5-phosphate. This is Ribose-5-phosphate isomerase A from Azoarcus sp. (strain BH72).